A 212-amino-acid chain; its full sequence is Casparian strip membrane protein 1 (212 aa).

The interval 1 to 28 (MDSSNSTKETGDIPIPVTSSKSSKAAPP) is disordered. At 1-49 (MDSSNSTKETGDIPIPVTSSKSSKAAPPPVVAAKAKSTTKQPLVSGWKR) the chain is on the cytoplasmic side. Residues 16 to 28 (PVTSSKSSKAAPP) are compositionally biased toward low complexity. A helical membrane pass occupies residues 50-70 (GLGIIDFILRICAIAAALAAA). Over 71-100 (TAMGTTSQQLPFFTQFFQFKADYNDLPAFT) the chain is Extracellular. Residues 101 to 121 (FFVIANAMAGAYLVLSLPFSI) traverse the membrane as a helical segment. At 122 to 133 (LCIVRPHILGAR) the chain is on the cytoplasmic side. A helical membrane pass occupies residues 134-154 (LMLLVFDTVAVPLVTAAASAA). Residues 155-186 (ASIVYLAHNGNSDANWVAICRQFNDFCQRVSG) are Extracellular-facing. Residues 187–207 (AVVASFITALLFVVLVAVSAV) traverse the membrane as a helical segment. The Cytoplasmic portion of the chain corresponds to 208-212 (ALRQK).

The protein belongs to the Casparian strip membrane proteins (CASP) family. In terms of assembly, homodimer and heterodimers.

Its subcellular location is the cell membrane. In terms of biological role, regulates membrane-cell wall junctions and localized cell wall deposition. Required for establishment of the Casparian strip membrane domain (CSD) and the subsequent formation of Casparian strips, a cell wall modification of the root endodermis that determines an apoplastic barrier between the intraorganismal apoplasm and the extraorganismal apoplasm and prevents lateral diffusion. In Helianthus annuus (Common sunflower), this protein is Casparian strip membrane protein 1.